Consider the following 324-residue polypeptide: Glyoxylate/hydroxypyruvate reductase B (324 aa).

Active-site residues include Arg237 and Glu266. His285 (proton donor) is an active-site residue.

It belongs to the D-isomer specific 2-hydroxyacid dehydrogenase family. GhrB subfamily. Homodimer.

The protein localises to the cytoplasm. It catalyses the reaction glycolate + NADP(+) = glyoxylate + NADPH + H(+). The catalysed reaction is (R)-glycerate + NAD(+) = 3-hydroxypyruvate + NADH + H(+). It carries out the reaction (R)-glycerate + NADP(+) = 3-hydroxypyruvate + NADPH + H(+). Its function is as follows. Catalyzes the NADPH-dependent reduction of glyoxylate and hydroxypyruvate into glycolate and glycerate, respectively. In Shigella flexneri serotype 5b (strain 8401), this protein is Glyoxylate/hydroxypyruvate reductase B.